Consider the following 264-residue polypeptide: Potassium channel regulatory protein (264 aa).

A BTB domain is found at 5–74 (DLVTLNVGGR…LRNHELLLPS (70 aa)).

Can form homooligomers. Interacts with KCNA1 (via cytoplasmic N-terminal domain) and KCNA4.

The protein localises to the endoplasmic reticulum. Its function is as follows. Inhibits potassium fluxes in cells. May regulate Kv1 family channel proteins by retaining a fraction of channels in endomembranes. This chain is Potassium channel regulatory protein (Kcnrg), found in Mus musculus (Mouse).